The chain runs to 543 residues: Phosphoribosylaminoimidazole carboxylase (543 aa).

The 188-residue stretch at 110-297 (KEHLIKNGIA…QFEAHVRAIT (188 aa)) folds into the ATP-grasp domain. 137–192 (GAKYGFPYMLKSRTMAYDGRGNFVVKDKSYIPEALKVLDDRPLYAEKWAPFSKELA) provides a ligand contact to ATP.

It in the C-terminal section; belongs to the AIR carboxylase family. Class I subfamily.

It catalyses the reaction 5-amino-1-(5-phospho-D-ribosyl)imidazole-4-carboxylate + H(+) = 5-amino-1-(5-phospho-beta-D-ribosyl)imidazole + CO2. Its pathway is purine metabolism; IMP biosynthesis via de novo pathway; 5-amino-1-(5-phospho-D-ribosyl)imidazole-4-carboxylate from 5-amino-1-(5-phospho-D-ribosyl)imidazole (carboxylase route): step 1/1. The protein is Phosphoribosylaminoimidazole carboxylase (ADE1) of Ogataea methanolica (Yeast).